We begin with the raw amino-acid sequence, 272 residues long: Putative hydro-lyase BRADO2538 (272 aa).

This sequence belongs to the D-glutamate cyclase family.

The sequence is that of Putative hydro-lyase BRADO2538 from Bradyrhizobium sp. (strain ORS 278).